Reading from the N-terminus, the 398-residue chain is Phosphoglycerate kinase (398 aa).

Substrate is bound by residues aspartate 22–asparagine 24, arginine 38, histidine 61–arginine 64, arginine 120, and arginine 153. ATP contacts are provided by residues lysine 206, glycine 297, glutamate 328, and glycine 354 to threonine 357.

The protein belongs to the phosphoglycerate kinase family. As to quaternary structure, monomer.

The protein localises to the cytoplasm. It carries out the reaction (2R)-3-phosphoglycerate + ATP = (2R)-3-phospho-glyceroyl phosphate + ADP. Its pathway is carbohydrate degradation; glycolysis; pyruvate from D-glyceraldehyde 3-phosphate: step 2/5. This Nautilia profundicola (strain ATCC BAA-1463 / DSM 18972 / AmH) protein is Phosphoglycerate kinase.